A 209-amino-acid chain; its full sequence is Thymidine kinase (209 aa).

ATP contacts are provided by residues 25–32 (GCMFAGKT) and 103–106 (DEVQ). E104 (proton acceptor) is an active-site residue. Positions 160, 163, 198, and 201 each coordinate Zn(2+).

Belongs to the thymidine kinase family. In terms of assembly, homotetramer.

The protein resides in the cytoplasm. It catalyses the reaction thymidine + ATP = dTMP + ADP + H(+). The polypeptide is Thymidine kinase (Mycoplasma mycoides subsp. mycoides SC (strain CCUG 32753 / NCTC 10114 / PG1)).